Consider the following 555-residue polypeptide: MTEWWKKAVVYQIYPRSFYDTNGDGIGDLRGIMDKLDYLKTLGIDCIWISPVYDSPQDDNGYDIRDYRKIDKMFGTNEDMDRLLDEAHARGIKIVMDLVVNHTSDEHAWFVESRKSKDNPYRDFYFWKDPKPDGTPPNNWGSMFSGSAWEYDETTGQYYLHYFSKKQPDLNWENEKVRKEIYDMMKFWMDKGVDGWRMDVIGSISKFLDFPDYELPEGQKYGIGKYHANGPRLHAFIQEMNREVLSKYDCMTVGEAIGSDVEIARKYTGPDRHELNMIFNFEHMDVDTKPGSPAGKWALKPFDLVELKQILSRWQYELADTGWNALYFENHDQARVVSRWGNDTTYRAECAKAFATILHGLKGTPFIYQGEEIGMVNADLELEEYDDIEIRNAYQELVMENQIMSKDEFLTAVRKKGRDNARTPMQWDGSFNAGFTTGTPWLKVNSRYSEINVAKALQEPDSIFYYYQSLIKLRHSYDVFTDGRYELLMPDHPHLYVYTRENESEKLLVAANLSENTVSFDQPDDNWKLLLGNYEDTGTSTLFRPYEAAIYYLEK.

The active-site Nucleophile is D199. E255 functions as the Proton donor in the catalytic mechanism.

This sequence belongs to the glycosyl hydrolase 13 family.

It is found in the cytoplasm. It catalyses the reaction Hydrolysis of (1-&gt;6)-alpha-D-glucosidic linkages in some oligosaccharides produced from starch and glycogen by alpha-amylase, and in isomaltose.. The sequence is that of Oligo-1,6-glucosidase (malL) from Heyndrickxia coagulans (Weizmannia coagulans).